Reading from the N-terminus, the 332-residue chain is Biotin synthase (332 aa).

Residues 46–275 (YYGKKVKLNM…SKEIRISGGR (230 aa)) enclose the Radical SAM core domain. [4Fe-4S] cluster-binding residues include Cys64, Cys68, and Cys71. Positions 108, 140, 200, and 270 each coordinate [2Fe-2S] cluster.

The protein belongs to the radical SAM superfamily. Biotin synthase family. In terms of assembly, homodimer. It depends on [4Fe-4S] cluster as a cofactor. The cofactor is [2Fe-2S] cluster.

The enzyme catalyses (4R,5S)-dethiobiotin + (sulfur carrier)-SH + 2 reduced [2Fe-2S]-[ferredoxin] + 2 S-adenosyl-L-methionine = (sulfur carrier)-H + biotin + 2 5'-deoxyadenosine + 2 L-methionine + 2 oxidized [2Fe-2S]-[ferredoxin]. It participates in cofactor biosynthesis; biotin biosynthesis; biotin from 7,8-diaminononanoate: step 2/2. In terms of biological role, catalyzes the conversion of dethiobiotin (DTB) to biotin by the insertion of a sulfur atom into dethiobiotin via a radical-based mechanism. In Lysinibacillus sphaericus (Bacillus sphaericus), this protein is Biotin synthase.